Reading from the N-terminus, the 414-residue chain is Succinylornithine transaminase (414 aa).

K260 bears the N6-(pyridoxal phosphate)lysine mark.

Belongs to the class-III pyridoxal-phosphate-dependent aminotransferase family. AstC subfamily. Requires pyridoxal 5'-phosphate as cofactor.

The catalysed reaction is N(2)-succinyl-L-ornithine + 2-oxoglutarate = N-succinyl-L-glutamate 5-semialdehyde + L-glutamate. It functions in the pathway amino-acid degradation; L-arginine degradation via AST pathway; L-glutamate and succinate from L-arginine: step 3/5. Functionally, catalyzes the transamination of N(2)-succinylornithine and alpha-ketoglutarate into N(2)-succinylglutamate semialdehyde and glutamate. Can also act as an acetylornithine aminotransferase. The sequence is that of Succinylornithine transaminase from Yersinia pseudotuberculosis serotype O:1b (strain IP 31758).